The chain runs to 543 residues: MSNIEHGLSFIDIMVFAIYVAIIIGVGLWVSRDKKGTQKSTEDYFLAGKSLPWWAVGASLIAANISAEQFIGMSGSGYSIGLAIASYEWMSAITLIIVGKYFLPIFIEKGIYTIPEFVEKRFNKKLKTILAVFWISLYIFVNLTSVLYLGGLALETILGIPLMYSILGLALFALVYSIYGGLSAVVWTDVIQVFFLVLGGFMTTYMAVSFIGGTDGWFAGVSKMVDAAPGHFEMILDQSNPQYMNLPGIAVLIGGLWVANLYYWGFNQYIIQRTLAAKSVSEAQKGIVFAAFLKLIVPFLVVLPGIAAYVITSDPQLMASLGDIAATNLPSAANADKAYPWLTQFLPVGVKGVVFAALAAAIVSSLASMLNSTATIFTMDIYKEYISPDSGDHKLVNVGRTAAVVALIIACLIAPMLGGIGQAFQYIQEYTGLVSPGILAVFLLGLFWKKTTSKGAIIGVVASIPFALFLKFMPLSMPFMDQMLYTLLFTMVVIAFTSLSTSINDDDPKGISVTSSMFVTDRSFNIAAYGIMIVLAVLYTLFW.

A run of 14 helical transmembrane segments spans residues 10–30 (FIDI…GLWV), 45–65 (FLAG…AANI), 79–99 (SIGL…IIVG), 129–149 (ILAV…VLYL), 156–176 (TILG…ALVY), 193–213 (VFFL…FIGG), 246–266 (LPGI…YWGF), 287–307 (IVFA…PGIA), 345–365 (FLPV…IVSS), 401–421 (TAAV…GGIG), 427–447 (IQEY…LGLF), 455–475 (GAII…FMPL), 483–503 (MLYT…STSI), and 523–543 (SFNI…TLFW).

The protein localises to the cell membrane. Actively transports glucose into cells by Na(+) cotransport. The protein is Sodium/glucose cotransporter (sglT) of Vibrio parahaemolyticus.